The primary structure comprises 188 residues: Peptidyl-tRNA hydrolase (188 aa).

Residue Tyr14 coordinates tRNA. His19 acts as the Proton acceptor in catalysis. Positions 64, 66, and 113 each coordinate tRNA.

Belongs to the PTH family. In terms of assembly, monomer.

The protein resides in the cytoplasm. The enzyme catalyses an N-acyl-L-alpha-aminoacyl-tRNA + H2O = an N-acyl-L-amino acid + a tRNA + H(+). Hydrolyzes ribosome-free peptidyl-tRNAs (with 1 or more amino acids incorporated), which drop off the ribosome during protein synthesis, or as a result of ribosome stalling. Functionally, catalyzes the release of premature peptidyl moieties from peptidyl-tRNA molecules trapped in stalled 50S ribosomal subunits, and thus maintains levels of free tRNAs and 50S ribosomes. The chain is Peptidyl-tRNA hydrolase from Chloroflexus aggregans (strain MD-66 / DSM 9485).